The sequence spans 86 residues: Large ribosomal subunit protein bL31B (86 aa).

The protein belongs to the bacterial ribosomal protein bL31 family. Type B subfamily. As to quaternary structure, part of the 50S ribosomal subunit.

In Saccharopolyspora erythraea (strain ATCC 11635 / DSM 40517 / JCM 4748 / NBRC 13426 / NCIMB 8594 / NRRL 2338), this protein is Large ribosomal subunit protein bL31B.